A 198-amino-acid chain; its full sequence is MAEKQTAKRNRREEILQSLALMLESSDGSQRITTAKLAASVGVSEAALYRHFPSKTRMFDSLIEFIEDSLITRINLILKDEKNTSTRLRLIMLLILGFGERNPGLTRILTGHALMFEQDRLQGRINQLFERIEAQLRQVLREKRMREGEGYTTDENLLASQLLAFCEGMLSRFVRSEFKYRPTDDFDARWPLIAAQLQ.

The 61-residue stretch at 10 to 70 folds into the HTH tetR-type domain; that stretch reads NRREEILQSL…SLIEFIEDSL (61 aa). The segment at residues 33–52 is a DNA-binding region (H-T-H motif); sequence TTAKLAASVGVSEAALYRHF. Residues 117–144 are a coiled coil; the sequence is EQDRLQGRINQLFERIEAQLRQVLREKR.

The protein belongs to the nucleoid occlusion factor SlmA family. Homodimer. Interacts with FtsZ.

It localises to the cytoplasm. Its subcellular location is the nucleoid. Its function is as follows. Required for nucleoid occlusion (NO) phenomenon, which prevents Z-ring formation and cell division over the nucleoid. Acts as a DNA-associated cell division inhibitor that binds simultaneously chromosomal DNA and FtsZ, and disrupts the assembly of FtsZ polymers. SlmA-DNA-binding sequences (SBS) are dispersed on non-Ter regions of the chromosome, preventing FtsZ polymerization at these regions. In Salmonella dublin (strain CT_02021853), this protein is Nucleoid occlusion factor SlmA.